A 156-amino-acid polypeptide reads, in one-letter code: Small ribosomal subunit protein uS7 (156 aa).

It belongs to the universal ribosomal protein uS7 family. As to quaternary structure, part of the 30S ribosomal subunit. Contacts proteins S9 and S11.

Functionally, one of the primary rRNA binding proteins, it binds directly to 16S rRNA where it nucleates assembly of the head domain of the 30S subunit. Is located at the subunit interface close to the decoding center, probably blocks exit of the E-site tRNA. In Maridesulfovibrio salexigens (strain ATCC 14822 / DSM 2638 / NCIMB 8403 / VKM B-1763) (Desulfovibrio salexigens), this protein is Small ribosomal subunit protein uS7.